Here is a 676-residue protein sequence, read N- to C-terminus: Potassium-transporting ATPase ATP-binding subunit (676 aa).

4 helical membrane-spanning segments follow: residues N24–P44, M45–F65, I212–T232, and S246–I266. The active-site 4-aspartylphosphate intermediate is the D302. ATP-binding positions include D339, E343, F372–S379, and K390. Mg(2+) contacts are provided by D513 and D517. Helical transmembrane passes span F573–I593, A611–L631, and G656–L676.

It belongs to the cation transport ATPase (P-type) (TC 3.A.3) family. Type IA subfamily. The system is composed of three essential subunits: KdpA, KdpB and KdpC.

The protein localises to the cell membrane. The enzyme catalyses K(+)(out) + ATP + H2O = K(+)(in) + ADP + phosphate + H(+). Its function is as follows. Part of the high-affinity ATP-driven potassium transport (or Kdp) system, which catalyzes the hydrolysis of ATP coupled with the electrogenic transport of potassium into the cytoplasm. This subunit is responsible for energy coupling to the transport system and for the release of the potassium ions to the cytoplasm. This is Potassium-transporting ATPase ATP-binding subunit from Enterococcus faecalis (strain ATCC 700802 / V583).